Consider the following 1069-residue polypeptide: Protogenin B (1069 aa).

The signal sequence occupies residues 1–26 (MGSVRWKTHQQWLIIFWILSFSGVFG). Topologically, residues 27-936 (FSELWFSIEP…LYHIDEKSMS (910 aa)) are extracellular. Ig-like domains follow at residues 30–117 (LWFS…ARLT), 122–208 (LVFS…AELV), 221–308 (PLII…GNVT), and 312–396 (PSLV…SRLI). Cystine bridges form between cysteine 51/cysteine 100 and cysteine 143/cysteine 191. Residues asparagine 81, asparagine 88, asparagine 180, and asparagine 229 are each glycosylated (N-linked (GlcNAc...) asparagine). Cysteine 242 and cysteine 290 are joined by a disulfide. N-linked (GlcNAc...) asparagine glycans are attached at residues asparagine 299 and asparagine 306. Residues 317–336 (KPESQTRPRAGTARFSCQAE) form a disordered region. A disulfide bridge connects residues cysteine 333 and cysteine 380. Fibronectin type-III domains are found at residues 406 to 500 (APRN…TLED), 502 to 601 (PLRT…TPKT), 608 to 701 (PAPN…CPST), 711 to 804 (PPDH…TLLE), and 809 to 904 (PPES…VKGK). 3 N-linked (GlcNAc...) asparagine glycosylation sites follow: asparagine 458, asparagine 473, and asparagine 560. Residues 590-605 (PSAWSSHRTPKTSSAT) are compositionally biased toward polar residues. The segment at 590 to 609 (PSAWSSHRTPKTSSATVPPA) is disordered. Residues asparagine 618, asparagine 720, and asparagine 834 are each glycosylated (N-linked (GlcNAc...) asparagine). A helical transmembrane segment spans residues 937–957 (GIIVGVCIALSCIILCIFILL). The Cytoplasmic segment spans residues 958–1069 (SKTQTQKSAS…KTVLCYEDEA (112 aa)).

This sequence belongs to the immunoglobulin superfamily. DCC family. As to expression, initially expressed in the ventral forebrain and ventral spinal cord. Later, also expressed in the midbrain and in parts of the diencephalon and hindbrain.

It is found in the membrane. May play a role in anteroposterior axis elongation. This chain is Protogenin B, found in Danio rerio (Zebrafish).